Here is a 398-residue protein sequence, read N- to C-terminus: E3 ubiquitin-protein ligase ATL6 (398 aa).

The signal sequence occupies residues 1–29 (MRSSDHMAFAGVLPIVFLLILSSADLAAS). Residues 50 to 70 (AVIVVILIAALFFMGFFSIYF) traverse the membrane as a helical segment. The segment at 128–170 (CAICLNEFEDDETLRLLPKCDHVFHPHCIDAWLEAHVTCPVCR) adopts an RING-type; atypical zinc-finger fold. Residue Ser278 is modified to Phosphoserine. Positions 368 to 398 (PRGGVNKDGEGTSVKSTGASGSTSGSVRLPV) are disordered. Residues 378–398 (GTSVKSTGASGSTSGSVRLPV) are compositionally biased toward low complexity.

The protein belongs to the RING-type zinc finger family. ATL subfamily.

The protein localises to the membrane. The catalysed reaction is S-ubiquitinyl-[E2 ubiquitin-conjugating enzyme]-L-cysteine + [acceptor protein]-L-lysine = [E2 ubiquitin-conjugating enzyme]-L-cysteine + N(6)-ubiquitinyl-[acceptor protein]-L-lysine.. The protein operates within protein modification; protein ubiquitination. In terms of biological role, E3 ubiquitin-protein ligase able to catalyze polyubiquitination with ubiquitin-conjugating enzyme E2 UBC8 in vitro. May be involved in the plant C/N response and the early steps of the plant defense signaling pathway. The protein is E3 ubiquitin-protein ligase ATL6 (ATL6) of Arabidopsis thaliana (Mouse-ear cress).